Reading from the N-terminus, the 138-residue chain is Large ribosomal subunit protein uL16 (138 aa).

A compositionally biased stretch (basic residues) spans 1–15; the sequence is MLSPRKVKYRKKQRG. The interval 1–20 is disordered; the sequence is MLSPRKVKYRKKQRGRLSGE.

It belongs to the universal ribosomal protein uL16 family. As to quaternary structure, part of the 50S ribosomal subunit.

Its function is as follows. Binds 23S rRNA and is also seen to make contacts with the A and possibly P site tRNAs. This Borrelia turicatae (strain 91E135) protein is Large ribosomal subunit protein uL16.